We begin with the raw amino-acid sequence, 201 residues long: Cutinase (201 aa).

The N-terminal stretch at 1-20 (MKTSAQQLLSLLLLPLSAIA) is a signal peptide. The cysteines at positions 31 and 105 are disulfide-linked. S116 acts as the Nucleophile in catalysis. C164 and C171 are joined by a disulfide. D168 is an active-site residue. H181 serves as the catalytic Proton donor/acceptor.

It belongs to the cutinase family. The 2 disulfide bonds play a critical role in holding the catalytic residues in juxta-position; reduction of the disulfide bridges results in the complete inactivation of the enzyme.

It localises to the secreted. The enzyme catalyses cutin + H2O = cutin monomers.. In terms of biological role, catalyzes the hydrolysis of complex carboxylic polyesters found in the cell wall of plants. Degrades cutin, a macromolecule that forms the structure of the plant cuticle. Allows pathogenic fungi to penetrate through the cuticular barrier into the host plant during the initial stage of fungal infection. This Monilinia fructicola (Brown rot fungus) protein is Cutinase (CUT1).